A 386-amino-acid polypeptide reads, in one-letter code: Succinate--CoA ligase [ADP-forming] subunit beta (386 aa).

The ATP-grasp domain occupies 9-244 (KELLKQFGVT…LDEEDPAEIE (236 aa)). Residues K46, 53 to 55 (GRG), E99, A102, and E107 contribute to the ATP site. N199 and D213 together coordinate Mg(2+). Substrate is bound by residues N264 and 321 to 323 (GIM).

This sequence belongs to the succinate/malate CoA ligase beta subunit family. As to quaternary structure, heterotetramer of two alpha and two beta subunits. The cofactor is Mg(2+).

The catalysed reaction is succinate + ATP + CoA = succinyl-CoA + ADP + phosphate. It carries out the reaction GTP + succinate + CoA = succinyl-CoA + GDP + phosphate. It functions in the pathway carbohydrate metabolism; tricarboxylic acid cycle; succinate from succinyl-CoA (ligase route): step 1/1. Its function is as follows. Succinyl-CoA synthetase functions in the citric acid cycle (TCA), coupling the hydrolysis of succinyl-CoA to the synthesis of either ATP or GTP and thus represents the only step of substrate-level phosphorylation in the TCA. The beta subunit provides nucleotide specificity of the enzyme and binds the substrate succinate, while the binding sites for coenzyme A and phosphate are found in the alpha subunit. The chain is Succinate--CoA ligase [ADP-forming] subunit beta from Bordetella pertussis (strain Tohama I / ATCC BAA-589 / NCTC 13251).